The following is a 207-amino-acid chain: MASRRRMLLKVIILGDSGVGKTSLMNQYVNRKFSNQYKATIGADFLTKEVQFEDRLFTLQIWDTAGQERFQSLGVAFYRGADCCVLVYDVNVMKSFENLNNWREEFLIQATPSDPENFPFVVLGNKIDVDGGNSRVVSEKKAKAWCASKGNIPYFETSAKEGFNVDDAFQCIAKNALNNEPEEEIYLPDTIDVAGGGRQQRSSGCEC.

Residues 15 to 22, 63 to 67, and 125 to 128 each bind GTP; these read GDSGVGKT, DTAGQ, and NKID. 2 S-geranylgeranyl cysteine lipidation sites follow: C205 and C207. Position 207 is a cysteine methyl ester (C207).

It belongs to the small GTPase superfamily. Rab family.

The protein resides in the cell membrane. In terms of biological role, protein transport. Probably involved in vesicular traffic. This chain is Ras-related protein Rab7, found in Prunus armeniaca (Apricot).